The sequence spans 403 residues: Riboflavin biosynthesis protein RibBA (403 aa).

The segment at 1 to 204 is DHBP synthase; that stretch reads MKNKVFASIG…IGELVNYRRR (204 aa). D-ribulose 5-phosphate is bound by residues 30–31, Asp35, 143–147, and Glu167; these read RE and RTGHT. Glu31 contacts Mg(2+). His146 is a Mg(2+) binding site. Residues 205–403 are GTP cyclohydrolase II; that stretch reads TEKFISEIVN…EKMGHMLKKV (199 aa). GTP is bound at residue 255–259; that stretch reads RVHSS. Cys260, Cys271, and Cys273 together coordinate Zn(2+). GTP-binding positions include Gln276, 298–300, and Thr320; that span reads EGR. Residue Asp332 is the Proton acceptor; for GTP cyclohydrolase activity of the active site. Catalysis depends on Arg334, which acts as the Nucleophile; for GTP cyclohydrolase activity. GTP is bound by residues Thr355 and Lys360.

This sequence in the N-terminal section; belongs to the DHBP synthase family. It in the C-terminal section; belongs to the GTP cyclohydrolase II family. It depends on Mg(2+) as a cofactor. Mn(2+) serves as cofactor. Requires Zn(2+) as cofactor.

The enzyme catalyses D-ribulose 5-phosphate = (2S)-2-hydroxy-3-oxobutyl phosphate + formate + H(+). The catalysed reaction is GTP + 4 H2O = 2,5-diamino-6-hydroxy-4-(5-phosphoribosylamino)-pyrimidine + formate + 2 phosphate + 3 H(+). Its pathway is cofactor biosynthesis; riboflavin biosynthesis; 2-hydroxy-3-oxobutyl phosphate from D-ribulose 5-phosphate: step 1/1. It functions in the pathway cofactor biosynthesis; riboflavin biosynthesis; 5-amino-6-(D-ribitylamino)uracil from GTP: step 1/4. In terms of biological role, catalyzes the conversion of D-ribulose 5-phosphate to formate and 3,4-dihydroxy-2-butanone 4-phosphate. Catalyzes the conversion of GTP to 2,5-diamino-6-ribosylamino-4(3H)-pyrimidinone 5'-phosphate (DARP), formate and pyrophosphate. The polypeptide is Riboflavin biosynthesis protein RibBA (Endomicrobium trichonymphae).